The chain runs to 169 residues: uncharacterized protein (169 aa).

Residues 32–162 form the Nudix hydrolase domain; sequence CNFRVVNSFV…EPAKSDLIKL (131 aa). The Nudix box motif lies at 69-91; it reads GGHVESGETYEDALQRELEEELN. Mg(2+) contacts are provided by E85 and E89.

It belongs to the Nudix hydrolase family. Mg(2+) is required as a cofactor.

This is an uncharacterized protein from Nostoc sp. (strain PCC 7120 / SAG 25.82 / UTEX 2576).